Consider the following 355-residue polypeptide: MQLSSTKPSSKTREPSTAQDIVTMQNILEKLYRAESISRQESQALFGAIIRGELEASQLAAALISMKVRGEHPDEIAGAATALLADAQPFPRPDYLFADIVGTGGDGTNSINISTASAFVAASCGLKIAKHGNRSVSSRSGSSDLLSAFGIKLDMSAQDSRQALDDLGVCFLFAPQYHLGFRHAMPVRQQLKTRTVFNVLGPLVNPARPPLALIGVYSPELVRPIAETLKVLGYQRAAVVHGGGMDEVAIHAPTQVAELNNGEIETYELTHRDFGLDTYSLSALQGGTPEENRDILASLLQGKGERAHAAAVAANVALLLRLFGQENLRQNAQQALEVIHSGQAYQRVIALSARG.

Residues G102, 105–106, S110, 112–115, 130–138, and S142 each bind 5-phospho-alpha-D-ribose 1-diphosphate; these read GD, NIST, and KHGNRSVSS. Residue G102 coordinates anthranilate. S114 is a Mg(2+) binding site. An anthranilate-binding site is contributed by N133. R188 contacts anthranilate. 2 residues coordinate Mg(2+): D246 and E247.

The protein belongs to the anthranilate phosphoribosyltransferase family. Homodimer. It depends on Mg(2+) as a cofactor.

The enzyme catalyses N-(5-phospho-beta-D-ribosyl)anthranilate + diphosphate = 5-phospho-alpha-D-ribose 1-diphosphate + anthranilate. It functions in the pathway amino-acid biosynthesis; L-tryptophan biosynthesis; L-tryptophan from chorismate: step 2/5. In terms of biological role, catalyzes the transfer of the phosphoribosyl group of 5-phosphorylribose-1-pyrophosphate (PRPP) to anthranilate to yield N-(5'-phosphoribosyl)-anthranilate (PRA). This chain is Anthranilate phosphoribosyltransferase, found in Pectobacterium carotovorum subsp. carotovorum (strain PC1).